Here is a 697-residue protein sequence, read N- to C-terminus: Potassium-transporting ATPase ATP-binding subunit (697 aa).

4 helical membrane passes run 55–75 (PIMF…FLPS), 79–99 (SIPG…VLFA), 245–265 (LTLI…YLGF), and 271–291 (VLVA…LSAI). Aspartate 324 (4-aspartylphosphate intermediate) is an active-site residue. Residues aspartate 361, glutamate 365, 393 to 400 (FKAETRMS), and lysine 412 contribute to the ATP site. Residues aspartate 535 and aspartate 539 each coordinate Mg(2+). The next 3 helical transmembrane spans lie at 605-625 (FAII…LNIM), 633-653 (AILS…PLAM), and 677-697 (GGVI…GLFI).

It belongs to the cation transport ATPase (P-type) (TC 3.A.3) family. Type IA subfamily. As to quaternary structure, the system is composed of three essential subunits: KdpA, KdpB and KdpC.

Its subcellular location is the cell membrane. The catalysed reaction is K(+)(out) + ATP + H2O = K(+)(in) + ADP + phosphate + H(+). Part of the high-affinity ATP-driven potassium transport (or Kdp) system, which catalyzes the hydrolysis of ATP coupled with the electrogenic transport of potassium into the cytoplasm. This subunit is responsible for energy coupling to the transport system and for the release of the potassium ions to the cytoplasm. The polypeptide is Potassium-transporting ATPase ATP-binding subunit (Bacillus cereus (strain ZK / E33L)).